The primary structure comprises 262 residues: Small ribosomal subunit protein uS2 (262 aa).

Positions 228 to 262 (VSNEEVAAEQNINLDDKEESEQAETTEENTSVESN) are disordered. Acidic residues predominate over residues 243 to 254 (DKEESEQAETTE).

This sequence belongs to the universal ribosomal protein uS2 family.

The sequence is that of Small ribosomal subunit protein uS2 from Staphylococcus epidermidis (strain ATCC 35984 / DSM 28319 / BCRC 17069 / CCUG 31568 / BM 3577 / RP62A).